A 328-amino-acid polypeptide reads, in one-letter code: Gonadotropin-releasing hormone receptor (328 aa).

Residues 1–38 (MANSASPEQNQNHCSAINNSIPLMQGNLPTLTLSGKIR) are Extracellular-facing. Asn-18 carries N-linked (GlcNAc...) asparagine glycosylation. The chain crosses the membrane as a helical span at residues 39–58 (VTVTFFLFLLSATFNASFLL). Residues 59–77 (KLQKWTQKKEKGKKLSRMK) lie on the Cytoplasmic side of the membrane. Residues 78 to 97 (LLLKHLTLANLLETLIVMPL) form a helical membrane-spanning segment. Residues 98-115 (DGMWNITVQWYAGELLCK) are Extracellular-facing. An N-linked (GlcNAc...) asparagine glycan is attached at Asn-102. Residues Cys-114 and Cys-196 are joined by a disulfide bond. The chain crosses the membrane as a helical span at residues 116 to 137 (VLSYLKLFSMYAPAFMMVVISL). Residues 138–164 (DRSLAITRPLALKSNSKVGQSMVGLAW) are Cytoplasmic-facing. A helical membrane pass occupies residues 165–184 (ILSSVFAGPQLYIFRMIHLA). At 185–212 (DSSGQTKVFSQCVTHCSFSQWWHQAFYN) the chain is on the extracellular side. The helical transmembrane segment at 213–232 (FFTFSCLFIIPLFIMLICNA) threads the bilayer. Topologically, residues 233 to 281 (KIIFTLTRVLHQDPHELQLNQSKNNIPRARLKTLKMTVAFATSFTVCWT) are cytoplasmic. Residues 282–300 (PYYVLGIWYWFDPEMLNRL) form a helical membrane-spanning segment. Residues 301–306 (SDPVNH) lie on the Extracellular side of the membrane. The helical transmembrane segment at 307–326 (FFFLFAFLNPCFDPLIYGYF) threads the bilayer. Residues 327 to 328 (SL) lie on the Cytoplasmic side of the membrane.

Belongs to the G-protein coupled receptor 1 family. As to expression, pituitary, ovary, testis, breast and prostate but not in liver and spleen.

The protein resides in the cell membrane. In terms of biological role, receptor for gonadotropin releasing hormone (GnRH) that mediates the action of GnRH to stimulate the secretion of the gonadotropic hormones luteinizing hormone (LH) and follicle-stimulating hormone (FSH). This receptor mediates its action by association with G-proteins that activate a phosphatidylinositol-calcium second messenger system. Isoform 2 may act as an inhibitor of GnRH-R signaling. This chain is Gonadotropin-releasing hormone receptor (GNRHR), found in Homo sapiens (Human).